Reading from the N-terminus, the 309-residue chain is RING finger protein mug145 (309 aa).

A helical transmembrane segment spans residues 23 to 43 (ILLFALVIILSVIFINFFFFY). Residues 205 to 247 (CIICYADYAFDDILRVLPCEHVFHTQCIDTWMTTMKASCPLCN) form an RING-type; atypical zinc finger.

Its subcellular location is the membrane. In terms of biological role, has a role in meiosis. This Schizosaccharomyces pombe (strain 972 / ATCC 24843) (Fission yeast) protein is RING finger protein mug145 (mug145).